The following is a 289-amino-acid chain: Energy-coupling factor transporter ATP-binding protein EcfA2 (289 aa).

The region spanning 3–245 (IEFKNVDYVY…QEWVKKHYLD (243 aa)) is the ABC transporter domain. 40–47 (GHTGSGKS) is a binding site for ATP.

The protein belongs to the ABC transporter superfamily. Energy-coupling factor EcfA family. Forms a stable energy-coupling factor (ECF) transporter complex composed of 2 membrane-embedded substrate-binding proteins (S component), 2 ATP-binding proteins (A component) and 2 transmembrane proteins (T component).

The protein resides in the cell membrane. ATP-binding (A) component of a common energy-coupling factor (ECF) ABC-transporter complex. Unlike classic ABC transporters this ECF transporter provides the energy necessary to transport a number of different substrates. This is Energy-coupling factor transporter ATP-binding protein EcfA2 from Lactobacillus johnsonii (strain CNCM I-12250 / La1 / NCC 533).